A 149-amino-acid polypeptide reads, in one-letter code: MIIGYFDGLCEPKNPGGIATFGFVIYLDNRKIEGYGLAEKPFSINSTNNVAEYSGLICLMETMLRLGISSPIIKGDSQLVIKQMNGEYKVKAKRIIPLYEKAIELKKKLNATLIWVPREENKEADRLSRVAYELVRRGKLRDIGCIILT.

An RNase H type-1 domain is found at 1–140 (MIIGYFDGLC…AYELVRRGKL (140 aa)). Mg(2+)-binding residues include Asp7, Glu52, Asp76, and Asp125. The Mn(2+) site is built by Asp7, Glu52, Asp76, and Asp125. An intrachain disulfide couples Cys58 to Cys145.

In terms of assembly, monomer. It depends on Mn(2+) as a cofactor. Requires Mg(2+) as cofactor. Co(2+) serves as cofactor. The cofactor is Ni(2+). In terms of processing, the disulfide bond confers considerable stability to the protein.

It is found in the cytoplasm. It carries out the reaction Endonucleolytic cleavage to 5'-phosphomonoester.. Its function is as follows. Nuclease that specifically degrades the RNA of RNA-DNA hybrids. Endonucleolytically removes RNA primers from the Okazaki fragments of lagging strand synthesis on its own. In the presence of Mn(2+) or Co(2+) can also cleave an RNA-RNA hybrid; the dsRNase activity is 10- 100-fold lower than RNase H activity. Complements the temperature-sensitive phenotype of an E.coli double rnhA/rnhB (RNase H) disruption mutant. The chain is Ribonuclease HI (rnhA) from Sulfurisphaera tokodaii (strain DSM 16993 / JCM 10545 / NBRC 100140 / 7) (Sulfolobus tokodaii).